The chain runs to 432 residues: 3-phosphoshikimate 1-carboxyvinyltransferase (432 aa).

Residues Lys-23, Ser-24, and Arg-28 each contribute to the 3-phosphoshikimate site. Lys-23 is a binding site for phosphoenolpyruvate. 2 residues coordinate phosphoenolpyruvate: Gly-99 and Arg-127. 3-phosphoshikimate contacts are provided by Ser-172, Ser-173, Gln-174, Ser-200, Asp-317, Asn-341, and Lys-345. Gln-174 is a binding site for phosphoenolpyruvate. Asp-317 (proton acceptor) is an active-site residue. Arg-349, Arg-391, and Lys-416 together coordinate phosphoenolpyruvate.

Belongs to the EPSP synthase family. In terms of assembly, monomer.

The protein resides in the cytoplasm. It catalyses the reaction 3-phosphoshikimate + phosphoenolpyruvate = 5-O-(1-carboxyvinyl)-3-phosphoshikimate + phosphate. The protein operates within metabolic intermediate biosynthesis; chorismate biosynthesis; chorismate from D-erythrose 4-phosphate and phosphoenolpyruvate: step 6/7. Functionally, catalyzes the transfer of the enolpyruvyl moiety of phosphoenolpyruvate (PEP) to the 5-hydroxyl of shikimate-3-phosphate (S3P) to produce enolpyruvyl shikimate-3-phosphate and inorganic phosphate. This chain is 3-phosphoshikimate 1-carboxyvinyltransferase, found in Blochmanniella pennsylvanica (strain BPEN).